A 179-amino-acid chain; its full sequence is Cell division protein SepF (179 aa).

A disordered region spans residues 19 to 55; the sequence is DSSLPYEKRDEPVFTSVNSSQEPALPMNQPSQSAGAK. Residues 33 to 55 show a composition bias toward polar residues; sequence TSVNSSQEPALPMNQPSQSAGAK.

It belongs to the SepF family. Homodimer. Interacts with FtsZ.

It localises to the cytoplasm. Cell division protein that is part of the divisome complex and is recruited early to the Z-ring. Probably stimulates Z-ring formation, perhaps through the cross-linking of FtsZ protofilaments. Its function overlaps with FtsA. This chain is Cell division protein SepF, found in Streptococcus pneumoniae (strain JJA).